We begin with the raw amino-acid sequence, 159 residues long: GDP-mannose mannosyl hydrolase (159 aa).

Substrate is bound by residues 2 to 3, phenylalanine 8, and arginine 36; that span reads FL. The Nudix hydrolase domain maps to 13 to 153; it reads RSTPLVSLDF…SRAYFLAEKR (141 aa). Mg(2+)-binding residues include glycine 49, glutamate 69, and glutamine 122. The Nudix box signature appears at 50 to 71; that stretch reads GRVQKDETLEAAFERLTMAELG.

In terms of assembly, homodimer. Requires Mg(2+) as cofactor.

It carries out the reaction GDP-alpha-D-mannose + H2O = D-mannose + GDP + H(+). Its function is as follows. Hydrolyzes both GDP-mannose and GDP-glucose. Could participate in the regulation of cell wall biosynthesis by influencing the concentration of GDP-mannose or GDP-glucose in the cell. Might also be involved in the biosynthesis of the slime polysaccharide colanic acid. The polypeptide is GDP-mannose mannosyl hydrolase (Escherichia coli (strain K12)).